We begin with the raw amino-acid sequence, 200 residues long: Recombination protein RecR (200 aa).

Residues 57–72 (CRQCRTLTEQELCPQC) form a C4-type zinc finger. One can recognise a Toprim domain in the interval 80 to 175 (TQLCVVEGPM…VASRIAHGVP (96 aa)).

Belongs to the RecR family.

In terms of biological role, may play a role in DNA repair. It seems to be involved in an RecBC-independent recombinational process of DNA repair. It may act with RecF and RecO. In Pseudomonas putida (strain W619), this protein is Recombination protein RecR.